We begin with the raw amino-acid sequence, 1201 residues long: Peroxisomal ATPase PEX6 (1201 aa).

A disordered region spans residues 247-300 (LPSNNNNNNNNNNNNNNNNNNNNNNNNNNNNNNNNKEEEVEEEEVEVEEEEKDN). Residues 250 to 280 (NNNNNNNNNNNNNNNNNNNNNNNNNNNNNNN) show a composition bias toward low complexity. Residues 284–297 (EEVEEEEVEVEEEE) show a composition bias toward acidic residues. 959–966 (GPPGTGKT) is a binding site for ATP.

This sequence belongs to the AAA ATPase family. As to quaternary structure, interacts with PEX1; forming the PEX1-PEX6 AAA ATPase complex, which is composed of a heterohexamer formed by a trimer of PEX1-PEX6 dimers.

The protein localises to the cytoplasm. The protein resides in the cytosol. It localises to the peroxisome membrane. It catalyses the reaction ATP + H2O = ADP + phosphate + H(+). Component of the PEX1-PEX6 AAA ATPase complex, a protein dislocase complex that mediates the ATP-dependent extraction of the PEX5 receptor from peroxisomal membranes, an essential step for PEX5 recycling. Specifically recognizes PEX5 monoubiquitinated at 'Cys-11', and pulls it out of the peroxisome lumen through the PEX2-PEX10-PEX12 retrotranslocation channel. Extraction by the PEX1-PEX6 AAA ATPase complex is accompanied by unfolding of the TPR repeats and release of bound cargo from PEX5. The polypeptide is Peroxisomal ATPase PEX6 (pex6) (Dictyostelium discoideum (Social amoeba)).